The primary structure comprises 886 residues: Putative leucine-rich repeat receptor-like serine/threonine-protein kinase At2g14440 (886 aa).

An N-terminal signal peptide occupies residues 1-23; that stretch reads METRSKLMLLACATFSIISLVKS. At 24-528 the chain is on the extracellular side; the sequence is QNQQGFISLY…KHQPKSWLVA (505 aa). Residues N49, N69, N232, N236, N259, N292, N434, N447, N458, and N471 are each glycosylated (N-linked (GlcNAc...) asparagine). LRR repeat units follow at residues 413–436, 437–460, 461–483, and 485–507; these read RIIS…QNLT, MLRE…QNLT, MLRE…LATI, and PLLV…LQDR. A helical transmembrane segment spans residues 529 to 549; that stretch reads IVASISCVAVTIIVLVLIFIF. Topologically, residues 550–886 are cytoplasmic; that stretch reads RRRKSSTRKV…TFISDIPSAR (337 aa). One can recognise a Protein kinase domain in the interval 581–850; it reads NNFEVVLGKG…NMTRVAHELN (270 aa). Residues 587-595 and K608 contribute to the ATP site; that span reads LGKGGFGVV. Y653 carries the post-translational modification Phosphotyrosine. D705 functions as the Proton acceptor in the catalytic mechanism. S739 carries the phosphoserine modification. Residues T740 and T745 each carry the phosphothreonine modification. At Y753 the chain carries Phosphotyrosine. The interval 863–886 is disordered; that stretch reads SQDQNSSKSSGHTVTFISDIPSAR. Positions 865-878 are enriched in polar residues; the sequence is DQNSSKSSGHTVTF.

This sequence belongs to the protein kinase superfamily. Ser/Thr protein kinase family.

It is found in the cell membrane. It catalyses the reaction L-seryl-[protein] + ATP = O-phospho-L-seryl-[protein] + ADP + H(+). The catalysed reaction is L-threonyl-[protein] + ATP = O-phospho-L-threonyl-[protein] + ADP + H(+). This is Putative leucine-rich repeat receptor-like serine/threonine-protein kinase At2g14440 from Arabidopsis thaliana (Mouse-ear cress).